The sequence spans 139 residues: Large ribosomal subunit protein uL16 (139 aa).

Residues 1–17 (MLIPRKVKHRKQHHPGR) show a composition bias toward basic residues. The tract at residues 1–24 (MLIPRKVKHRKQHHPGRTGHATGG) is disordered.

Belongs to the universal ribosomal protein uL16 family. Part of the 50S ribosomal subunit.

Binds 23S rRNA and is also seen to make contacts with the A and possibly P site tRNAs. The polypeptide is Large ribosomal subunit protein uL16 (Clavibacter michiganensis subsp. michiganensis (strain NCPPB 382)).